The sequence spans 218 residues: N-(5'-phosphoribosyl)anthranilate isomerase (218 aa).

Belongs to the TrpF family.

It carries out the reaction N-(5-phospho-beta-D-ribosyl)anthranilate = 1-(2-carboxyphenylamino)-1-deoxy-D-ribulose 5-phosphate. It participates in amino-acid biosynthesis; L-tryptophan biosynthesis; L-tryptophan from chorismate: step 3/5. The sequence is that of N-(5'-phosphoribosyl)anthranilate isomerase from Halobacterium salinarum (strain ATCC 29341 / DSM 671 / R1).